Here is a 164-residue protein sequence, read N- to C-terminus: UPF0304 protein YE1336 (164 aa).

The protein belongs to the UPF0304 family.

This is UPF0304 protein YE1336 from Yersinia enterocolitica serotype O:8 / biotype 1B (strain NCTC 13174 / 8081).